The following is a 472-amino-acid chain: Transmembrane protein 8B (472 aa).

Residues 1–37 (MNMPQSLGNQPLPPEPPSLRTPAEGPGATSPPEHCWP) form a disordered region. Residues 1–233 (MNMPQSLGNQ…ADALTYGFQL (233 aa)) lie on the Extracellular side of the membrane. 2 N-linked (GlcNAc...) asparagine glycosylation sites follow: N92 and N100. Residues 182 to 221 (FLSPCVDDCGPYGQCKLLRTHNYLYAACECKAGWRGWGCT) form the EGF-like domain. Cystine bridges form between C186/C196, C190/C209, and C211/C220. Residues 234–254 (LSTLLLCLSNLMFLPPVVLAI) form a helical membrane-spanning segment. The Cytoplasmic portion of the chain corresponds to 255-257 (RSR). Residues 258 to 277 (YVLEAAVYTFTMFFSTFYHA) traverse the membrane as a helical segment. Topologically, residues 278–292 (CDQPGIVVFCIMDYD) are extracellular. The helical transmembrane segment at 293-313 (VLQFCDFLGSLMSVWVTVIAM) threads the bilayer. At 314–315 (AR) the chain is on the cytoplasmic side. Residues 316-336 (LQPVVKQVLYLLGAMLLSMAL) traverse the membrane as a helical segment. Residues 337-342 (QLDRHG) lie on the Extracellular side of the membrane. Residues 343 to 363 (LWNLLGPSLFALGILATAWTV) form a helical membrane-spanning segment. Residues 364–379 (RSVRRRHCYPPTWRRW) lie on the Cytoplasmic side of the membrane. Residues 380–400 (LFCLCPGSLIAGSAILLYAFV) traverse the membrane as a helical segment. The Extracellular segment spans residues 401–405 (ETRDN). A helical membrane pass occupies residues 406–426 (YFYIHSIWHMLIAGSVGFLLP). At 427 to 472 (PRAKTDRRVPSGARARGCGYQLCINEQEELGLVGPGGATVSSICAS) the chain is on the cytoplasmic side.

This sequence belongs to the TMEM8 family. As to quaternary structure, may interact with EZR. In terms of processing, N-glycosylated.

Its subcellular location is the cell membrane. The protein resides in the cytoplasm. It is found in the nucleus. The protein localises to the mitochondrion. It localises to the endoplasmic reticulum. Functionally, may function as a regulator of the EGFR pathway. Probable tumor suppressor which may function in cell growth, proliferation and adhesion. This chain is Transmembrane protein 8B (TMEM8B), found in Bos taurus (Bovine).